A 257-amino-acid chain; its full sequence is MLKSLTSQGLVLYNRNFREDDKLVKIFTEQAGKRMFFVKHAGKSKLAPVIQPLTAANLLMKINDDGLSYIEDYQDVVTYHRINEDLFIMAYASYVAALADASLQDNQPDPALFAFLQKTLELMNNGLDYEVLTNIFEIQILSRFGVSLNFHDCAFCHRTGLPFDFSFKYSGVLCPDHYHQDERRCHLNPNLPFLLDQFQAVRFSELETISLKPDIKKQLRDFIDLLYDEYVGIHLKSKKFIDSLGDWGSILKDKNEE.

Belongs to the RecO family.

Its function is as follows. Involved in DNA repair and RecF pathway recombination. This Streptococcus sanguinis (strain SK36) protein is DNA repair protein RecO.